The sequence spans 445 residues: MREILHIQGGQCGNQIGAKFWEVICGEHGVDSTGCYSGVSPQQLERINVYYNEAGGGRYVPRAVLMDLEPGTMESIRAGPFGGIFRPDNFVYGQSGAGNNWAKGHYTEGAELIDSVLDVVRKEAENCDCLQGFQVCHSLGGGTGSGMGTLLISKIREEYPDRMMLTFSVFPSPKVSDTVVEPYNATLSVHQLVENADECMVLDNEALYDICFRTLKLTNPSFGDLNHLISATMSGVTCCLRFPGQLNSDLRKLAVNLIPFPRLHFFMVGFAPLTSRGSQQYRALTVPELTQQMWDAKNMMCAADPRHGRYLTASAMFRGKMSTKEVDEQMINVQNKNSSYFVEWIPNNVKSSVCDIPPVGLSMSSTFVGNSTSIQEMFRRVSEQFTAMFRRKAFLHWYTSEGMDEMEFTEAESNMNDLVAEYQQYQDATAEEYDEEEQDGEEEHD.

GTP contacts are provided by Q11, E69, S138, G142, T143, G144, N204, and N226. E69 lines the Mg(2+) pocket. The interval 425-445 is disordered; that stretch reads YQDATAEEYDEEEQDGEEEHD. Over residues 429–445 the composition is skewed to acidic residues; the sequence is TAEEYDEEEQDGEEEHD.

This sequence belongs to the tubulin family. As to quaternary structure, dimer of alpha and beta chains. A typical microtubule is a hollow water-filled tube with an outer diameter of 25 nm and an inner diameter of 15 nM. Alpha-beta heterodimers associate head-to-tail to form protofilaments running lengthwise along the microtubule wall with the beta-tubulin subunit facing the microtubule plus end conferring a structural polarity. Microtubules usually have 13 protofilaments but different protofilament numbers can be found in some organisms and specialized cells. Mg(2+) serves as cofactor.

The protein resides in the cytoplasm. Its subcellular location is the cytoskeleton. In terms of biological role, tubulin is the major constituent of microtubules, a cylinder consisting of laterally associated linear protofilaments composed of alpha- and beta-tubulin heterodimers. Microtubules grow by the addition of GTP-tubulin dimers to the microtubule end, where a stabilizing cap forms. Below the cap, tubulin dimers are in GDP-bound state, owing to GTPase activity of alpha-tubulin. The chain is Tubulin beta-3 chain (TUBB3) from Zea mays (Maize).